A 192-amino-acid chain; its full sequence is Large ribosomal subunit protein bL9 (192 aa).

The disordered stretch occupies residues 173–192; that stretch reads ALRPEDFFDPEADGVDEDEA. Positions 179-192 are enriched in acidic residues; the sequence is FFDPEADGVDEDEA.

The protein belongs to the bacterial ribosomal protein bL9 family.

Functionally, binds to the 23S rRNA. The protein is Large ribosomal subunit protein bL9 (rplI) of Rhizobium leguminosarum bv. trifolii.